We begin with the raw amino-acid sequence, 113 residues long: U11-theraphotoxin-Hhn1p (113 aa).

Residues 1–21 (MNTVRVTFLLVFVLAVSLGQA) form the signal peptide. Residues 22–74 (DKDENRMEMQEKTEQGKSYLDFAENLLLQKLEELEAKLLEEDSEESRNSRQKR) constitute a propeptide that is removed on maturation. The disordered stretch occupies residues 61-83 (EEDSEESRNSRQKRCIGEGVPCD). 3 cysteine pairs are disulfide-bonded: C75/C90, C82/C95, and C89/C110.

The protein belongs to the neurotoxin 14 (magi-1) family. 01 (HNTX-16) subfamily. In terms of tissue distribution, expressed by the venom gland.

It is found in the secreted. In terms of biological role, probable ion channel inhibitor. This is U11-theraphotoxin-Hhn1p from Cyriopagopus hainanus (Chinese bird spider).